A 272-amino-acid chain; its full sequence is Insertion element IS600 uncharacterized 31 kDa protein (272 aa).

Residues 105–268 (APTAPNQVWV…SPAAFREKYH (164 aa)) form the Integrase catalytic domain.

The sequence is that of Insertion element IS600 uncharacterized 31 kDa protein from Shigella sonnei.